A 318-amino-acid chain; its full sequence is Mitochondrial coenzyme A transporter SLC25A42 (318 aa).

Solcar repeat units lie at residues Arg31–Ile117, Leu129–Leu214, and Pro224–Leu312. 6 consecutive transmembrane segments (helical) span residues Val33 to Pro53, Leu89 to Ser109, Leu135 to Val155, Leu186 to Phe206, Met230 to Val250, and Leu293 to Leu313.

Belongs to the mitochondrial carrier (TC 2.A.29) family. Widely expressed. Highly expressed in adipose, followed by hypothalamus and brain coronal sections containing corpus callosum, fornix, thalamus, hypothalamus, optic chiasm, pons, midbrain, and cerebellum.

The protein localises to the mitochondrion inner membrane. The enzyme catalyses ADP(out) + CoA(in) = ADP(in) + CoA(out). It carries out the reaction 3'-dephospho-CoA(in) + ADP(out) = 3'-dephospho-CoA(out) + ADP(in). It catalyses the reaction adenosine 3',5'-bisphosphate(in) + ADP(out) = adenosine 3',5'-bisphosphate(out) + ADP(in). The catalysed reaction is AMP(in) + ADP(out) = AMP(out) + ADP(in). The enzyme catalyses dADP(in) + ADP(out) = dADP(out) + ADP(in). It carries out the reaction ADP(in) + ATP(out) = ADP(out) + ATP(in). Functionally, mitochondrial carrier mediating the transport of coenzyme A (CoA) in mitochondria in exchange for intramitochondrial (deoxy)adenine nucleotides and adenosine 3',5'-diphosphate. This chain is Mitochondrial coenzyme A transporter SLC25A42 (Slc25a42), found in Rattus norvegicus (Rat).